We begin with the raw amino-acid sequence, 210 residues long: MRNVQIALTKGRLEKHVIPLFEQIGMDCSEMMDKGRKLTFKSNNSNVSFILVKAVDVATYVEHGVADIGIVGKDILMEYEKDVYEMIDLQVGCCKLCIASIPAYDPKKYRKKRIATKYPSITSRYFCDKGEDVEIIKIEGSVEIAPLLGLVDAIVDIVETGKTLQENGLIVLEEMYPISARMIVNKAALKMKKDEIFNIINKIECIVSKK.

Belongs to the ATP phosphoribosyltransferase family. Short subfamily. Heteromultimer composed of HisG and HisZ subunits.

The protein localises to the cytoplasm. The enzyme catalyses 1-(5-phospho-beta-D-ribosyl)-ATP + diphosphate = 5-phospho-alpha-D-ribose 1-diphosphate + ATP. Its pathway is amino-acid biosynthesis; L-histidine biosynthesis; L-histidine from 5-phospho-alpha-D-ribose 1-diphosphate: step 1/9. In terms of biological role, catalyzes the condensation of ATP and 5-phosphoribose 1-diphosphate to form N'-(5'-phosphoribosyl)-ATP (PR-ATP). Has a crucial role in the pathway because the rate of histidine biosynthesis seems to be controlled primarily by regulation of HisG enzymatic activity. The sequence is that of ATP phosphoribosyltransferase from Bacillus cytotoxicus (strain DSM 22905 / CIP 110041 / 391-98 / NVH 391-98).